We begin with the raw amino-acid sequence, 331 residues long: MIDTSIPLVDLHRHLDGNVRVNTIWELGHQHGIALPADSLETLAPFVQIQGKETSLVAFLKKLDWMVGVLADLDAVKRVAYENVADAALSGLDYAELRFSPYYMAMNHKLPIEGVVEAVVDGVKAGLKDYNVKINLIGILSRSFGQAACTQELEGLLAHKQHLVAMDLAGDEMGFPGELFNDHFKRVRDADLAITAHAGEAAGSQSMWQAIQELGATRIGHGVNAIHDPKLMEYLAKHRIGIESCPTSNLHTSTVASYAEHPFRTFMDAGVLINLNTDDPGVSAIDINHEYRIAKAELKLTDAELAQVQRNGVEMAFLSDSDRKALYAAKV.

Zn(2+)-binding residues include H12 and H14. Residues H14, D16, and G170 each coordinate substrate. Position 197 (H197) interacts with Zn(2+). E200 acts as the Proton donor in catalysis. D278 contributes to the Zn(2+) binding site. D279 is a substrate binding site.

It belongs to the metallo-dependent hydrolases superfamily. Adenosine and AMP deaminases family. Adenosine deaminase subfamily. Zn(2+) serves as cofactor.

It carries out the reaction adenosine + H2O + H(+) = inosine + NH4(+). It catalyses the reaction 2'-deoxyadenosine + H2O + H(+) = 2'-deoxyinosine + NH4(+). In terms of biological role, catalyzes the hydrolytic deamination of adenosine and 2-deoxyadenosine. This Shewanella baltica (strain OS223) protein is Adenosine deaminase.